A 663-amino-acid chain; its full sequence is MVSQSSGRQDSPVDPWEGVSDDPGNTDGLPSLLDTEHPFCPSDIRFTRHRAAWINPPCAQQQLQDASPQVLAVGNRESHTASNTKSPLGTSPLSLGDSVVETSLPKGTTDSLGSSSAWGTAGNGSDSSVTLKEERAGLPRRCPHTSLITSSKTVSGPPCPEDGRAFFKPSQLTASADADAVQVGGRTVSSNSFSPEAFVLPVDAEKENAHFYVADMIISVMEKMKCNILSQQHTETWSTEEAGRSLGNSRADLEGTFYTHVKQESGSSTSSDSGYEGCVLQVSPVVETPTFSEVTEEDCKCDFDDFVIVELGDFSNTTEPCGCSSDTSKSVIHEPNFNSAELIAKELYRVFRKCWMLAEVHYQLTGSLDAAGSIVINEERVQKDFESSTDVVQEIKLKSRIRGTGDWAPPRFQIIFDIHPPLKRDLVVIAQNFFCAGCGTPIEPKFVKRLRYCEYLGKYFCDCCHSYSESCIPARILRMWDFRKYYVSNFSKRLLDHIWHEPIFNLLHVSHGLYTKAKELDRVREIQEQLFHIKKLLKTCRFAESTLKEFEQLPGHLTEALHLFSLEDMVKVKKGLLAPLLKDILKASLEHVASCELCQGKGFICEFCRSTAVIFPFQTATCRRCSACRACFHKQCFQSSKCPRCARITARRRLLESLPSAAT.

Disordered stretches follow at residues 1–36 (MVSQSSGRQDSPVDPWEGVSDDPGNTDGLPSLLDTE) and 65–136 (DASP…EERA). Polar residues-rich tracts occupy residues 80–93 (TASNTKSPLGTSPL) and 105–130 (PKGTTDSLGSSSAWGTAGNGSDSSVT). The tract at residues 196-235 (EAFVLPVDAEKENAHFYVADMIISVMEKMKCNILSQQHTE) is interaction with UVRAG. N6-acetyllysine is present on residues Lys484, Lys534, Lys574, and Lys634.

In terms of assembly, interacts with UVRAG; the interaction is direct and promotes association with the PI3K/PI3KC3 and HOPS complexes. Interacts with STX17. In terms of processing, acetylated by KAT5/TIP60 under autophagy induction, promoting autophagosome maturation and lipid metabolism. Lys-484 and Lys-574 constitute the key sites for tuning function in autophagy.

It localises to the cytoplasmic vesicle. The protein localises to the autophagosome membrane. Regulator of autophagy that promotes autophagosome maturation by facilitating the biogenesis of phosphatidylinositol 3-phosphate (PtdIns(3)P) in late steps of autophagy. Acts by antagonizing RUBCN, thereby stimulating phosphatidylinositol 3-kinase activity of the PI3K/PI3KC3 complex. Following anchorage to the autophagosomal SNARE STX17, promotes the recruitment of PI3K/PI3KC3 and HOPS complexes to the autophagosome to regulate the fusion specificity of autophagosomes with late endosomes/lysosomes. Binds phosphoinositides phosphatidylinositol 3-phosphate (PtdIns(3)P), 4-phosphate (PtdIns(4)P) and 5-phosphate (PtdIns(5)P). In addition to its role in autophagy, acts as a regulator of lipid and glycogen homeostasis. May act as a tumor suppressor. This is Protein associated with UVRAG as autophagy enhancer from Bos taurus (Bovine).